We begin with the raw amino-acid sequence, 81 residues long: Sulfur carrier protein TusA (81 aa).

Cys19 (cysteine persulfide intermediate) is an active-site residue.

The protein belongs to the sulfur carrier protein TusA family.

Its subcellular location is the cytoplasm. Functionally, sulfur carrier protein which probably makes part of a sulfur-relay system. This Shewanella piezotolerans (strain WP3 / JCM 13877) protein is Sulfur carrier protein TusA.